The sequence spans 227 residues: Cytidylate kinase (227 aa).

Residue 12–20 participates in ATP binding; the sequence is GPSGAGKGT.

The protein belongs to the cytidylate kinase family. Type 1 subfamily.

The protein resides in the cytoplasm. It catalyses the reaction CMP + ATP = CDP + ADP. The catalysed reaction is dCMP + ATP = dCDP + ADP. The sequence is that of Cytidylate kinase from Salmonella typhimurium (strain LT2 / SGSC1412 / ATCC 700720).